We begin with the raw amino-acid sequence, 186 residues long: ATP synthase subunit delta (186 aa).

Belongs to the ATPase delta chain family. F-type ATPases have 2 components, F(1) - the catalytic core - and F(0) - the membrane proton channel. F(1) has five subunits: alpha(3), beta(3), gamma(1), delta(1), epsilon(1). CF(0) has four main subunits: a(1), b(1), b'(1) and c(10-14). The alpha and beta chains form an alternating ring which encloses part of the gamma chain. F(1) is attached to F(0) by a central stalk formed by the gamma and epsilon chains, while a peripheral stalk is formed by the delta, b and b' chains.

The protein localises to the cell inner membrane. Functionally, f(1)F(0) ATP synthase produces ATP from ADP in the presence of a proton or sodium gradient. F-type ATPases consist of two structural domains, F(1) containing the extramembraneous catalytic core and F(0) containing the membrane proton channel, linked together by a central stalk and a peripheral stalk. During catalysis, ATP synthesis in the catalytic domain of F(1) is coupled via a rotary mechanism of the central stalk subunits to proton translocation. In terms of biological role, this protein is part of the stalk that links CF(0) to CF(1). It either transmits conformational changes from CF(0) to CF(1) or is implicated in proton conduction. This is ATP synthase subunit delta from Rhodospirillum centenum (strain ATCC 51521 / SW).